The following is an 835-amino-acid chain: Invasin (835 aa).

The Big-1 domain maps to 451-541; the sequence is VITSEVTDDG…QQATVDVRFA (91 aa).

Belongs to the intimin/invasin family.

Its subcellular location is the cell outer membrane. Functionally, invasin is a protein that allows enteric bacteria to penetrate cultured mammalian cells. The entry of invasin in the cell is mediated by binding several beta-1 chain integrins. The polypeptide is Invasin (Yersinia enterocolitica).